The following is a 472-amino-acid chain: tRNA modification GTPase MnmE (472 aa).

(6S)-5-formyl-5,6,7,8-tetrahydrofolate contacts are provided by R28, E91, and K130. Positions 225-391 (GAKVVLAGKT…LSEKAYSVLA (167 aa)) constitute a TrmE-type G domain. K(+) is bound at residue N235. GTP-binding positions include 235–240 (NAGKSS), 254–260 (SDIHGTT), and 279–282 (DTAG). S239 is a binding site for Mg(2+). Positions 254, 256, and 259 each coordinate K(+). T260 is a Mg(2+) binding site. Residue K472 participates in (6S)-5-formyl-5,6,7,8-tetrahydrofolate binding.

This sequence belongs to the TRAFAC class TrmE-Era-EngA-EngB-Septin-like GTPase superfamily. TrmE GTPase family. As to quaternary structure, homodimer. Heterotetramer of two MnmE and two MnmG subunits. The cofactor is K(+).

Its subcellular location is the cytoplasm. Its function is as follows. Exhibits a very high intrinsic GTPase hydrolysis rate. Involved in the addition of a carboxymethylaminomethyl (cmnm) group at the wobble position (U34) of certain tRNAs, forming tRNA-cmnm(5)s(2)U34. In Treponema denticola (strain ATCC 35405 / DSM 14222 / CIP 103919 / JCM 8153 / KCTC 15104), this protein is tRNA modification GTPase MnmE.